Here is a 919-residue protein sequence, read N- to C-terminus: WD repeat-containing protein 47 (919 aa).

Residues 10–42 (KEVEIIKLILDFLNSKKLHISMLALEKESGVIN) form the LisH domain. The 58-residue stretch at 45-102 (FSDDMLFLRQLILDGQWDEVLQFIQPLECMEKFDKKRFRYIILKQKFLEALCVNNAMS) folds into the CTLH domain. A Phosphothreonine modification is found at T285. Residues S289, S292, S297, and S312 each carry the phosphoserine modification. The interval 393–421 (GQSSVSEKEPANGAQNPGPAKQEKNELRD) is disordered. A Phosphoserine modification is found at S422. The tract at residues 500 to 590 (LNQQCNGSKG…SLSRSKGEED (91 aa)) is disordered. Polar residues predominate over residues 517–551 (VTSFTTPPQDSSQRLTHDASNIHTSTPRNPGSTNH). Position 542 is a phosphothreonine (T542). 7 WD repeats span residues 604–643 (EDTQ…DPSA), 659–698 (HHKG…CNAT), 706–748 (MHDG…GQGL), 753–791 (GHTG…CVRV), 798–837 (GTGS…MVQS), 840–879 (PHSS…TKQL), and 886–918 (EHKD…WTYN).

In terms of assembly, interacts with MAP1S (via WD repeats).

It is found in the cytoplasm. It localises to the cytoskeleton. This chain is WD repeat-containing protein 47 (WDR47), found in Homo sapiens (Human).